A 493-amino-acid chain; its full sequence is ATP synthase subunit beta, chloroplastic (493 aa).

ATP is bound at residue 170-177; sequence GGAGVGKT.

It belongs to the ATPase alpha/beta chains family. F-type ATPases have 2 components, CF(1) - the catalytic core - and CF(0) - the membrane proton channel. CF(1) has five subunits: alpha(3), beta(3), gamma(1), delta(1), epsilon(1). CF(0) has four main subunits: a(1), b(1), b'(1) and c(9-12).

The protein localises to the plastid. It is found in the chloroplast thylakoid membrane. It catalyses the reaction ATP + H2O + 4 H(+)(in) = ADP + phosphate + 5 H(+)(out). Its function is as follows. Produces ATP from ADP in the presence of a proton gradient across the membrane. The catalytic sites are hosted primarily by the beta subunits. This Lachenalia pusilla (Cape cowslips) protein is ATP synthase subunit beta, chloroplastic.